Reading from the N-terminus, the 128-residue chain is NADH-ubiquinone oxidoreductase chain 3 (128 aa).

A run of 3 helical transmembrane segments spans residues 3–23 (TIYT…NYLI), 52–72 (VAFI…SSIL), and 84–104 (YGLS…VYEI).

It belongs to the complex I subunit 3 family.

The protein resides in the mitochondrion membrane. The catalysed reaction is a ubiquinone + NADH + 5 H(+)(in) = a ubiquinol + NAD(+) + 4 H(+)(out). Core subunit of the mitochondrial membrane respiratory chain NADH dehydrogenase (Complex I) that is believed to belong to the minimal assembly required for catalysis. Complex I functions in the transfer of electrons from NADH to the respiratory chain. The immediate electron acceptor for the enzyme is believed to be ubiquinone. This Debaryomyces hansenii (strain ATCC 36239 / CBS 767 / BCRC 21394 / JCM 1990 / NBRC 0083 / IGC 2968) (Yeast) protein is NADH-ubiquinone oxidoreductase chain 3 (ND3).